We begin with the raw amino-acid sequence, 235 residues long: Secretory carrier-associated membrane protein 5 (235 aa).

Topologically, residues 1 to 39 (MAEKVNNFPPLPKFIPLKPCFYQDFEADIPPQHLSLTKR) are cytoplasmic. Residues 40–60 (LYYLWMLNSVTLAVNLVGCLA) traverse the membrane as a helical segment. Over 61 to 67 (WLIGGGG) the chain is Extracellular. The chain crosses the membrane as a helical span at residues 68 to 88 (ATNFGLAFLWLILFTPCSYVC). The Cytoplasmic segment spans residues 89–102 (WFRPIYKAFKTDSS). A helical membrane pass occupies residues 103–125 (FSFMAFFFTFMAQLVISIIQAVG). The Extracellular portion of the chain corresponds to 126–148 (IPGWGVCGWIATISFFGTNIGSA). A helical transmembrane segment spans residues 149–169 (VVMLIPTVMFTVVAVFSFIAL). Residues 170-235 (SMVHKFYRGS…TPNYTYSNEM (66 aa)) are Cytoplasmic-facing.

Belongs to the SCAMP family. SCAMP5 subfamily. Interacts (via C-terminal part) with SYT1 and SYT2; interaction with synaptotagmins making a link with the SNARE molecules. Interacts with SLC9A7. Brain-specific.

It localises to the cell membrane. It is found in the golgi apparatus membrane. Its subcellular location is the golgi apparatus. The protein resides in the trans-Golgi network membrane. The protein localises to the recycling endosome membrane. It localises to the cytoplasmic vesicle. It is found in the secretory vesicle. Its subcellular location is the synaptic vesicle membrane. Functionally, required for the calcium-dependent exocytosis of signal sequence-containing cytokines such as CCL5. Probably acts in cooperation with the SNARE machinery. This is Secretory carrier-associated membrane protein 5 (Scamp5) from Mus musculus (Mouse).